The sequence spans 388 residues: Na(+)/H(+) antiporter NhaA (388 aa).

The next 11 membrane-spanning stretches (helical) occupy residues 14–34, 59–79, 95–115, 125–145, 154–174, 179–199, 219–239, 254–274, 292–312, 328–348, and 360–380; these read GGII…MGAT, MLLW…GLEV, AFPV…YLAF, GWAI…ALLG, IFLM…IALF, LSIV…LLNL, VLKS…FIPL, VLHP…NAGV, IIAG…WLAL, IMAV…IASL, and WAKL…YSWL.

The protein belongs to the NhaA Na(+)/H(+) (TC 2.A.33) antiporter family.

It localises to the cell inner membrane. It catalyses the reaction Na(+)(in) + 2 H(+)(out) = Na(+)(out) + 2 H(+)(in). In terms of biological role, na(+)/H(+) antiporter that extrudes sodium in exchange for external protons. This is Na(+)/H(+) antiporter NhaA from Salmonella paratyphi A (strain ATCC 9150 / SARB42).